The primary structure comprises 311 residues: Acetyl-coenzyme A carboxylase carboxyl transferase subunit alpha (311 aa).

The CoA carboxyltransferase C-terminal domain occupies 36–286; it reads KLEKEVEKTF…KEYFIKSLAE (251 aa).

The protein belongs to the AccA family. In terms of assembly, acetyl-CoA carboxylase is a heterohexamer composed of biotin carboxyl carrier protein (AccB), biotin carboxylase (AccC) and two subunits each of ACCase subunit alpha (AccA) and ACCase subunit beta (AccD).

Its subcellular location is the cytoplasm. The catalysed reaction is N(6)-carboxybiotinyl-L-lysyl-[protein] + acetyl-CoA = N(6)-biotinyl-L-lysyl-[protein] + malonyl-CoA. It participates in lipid metabolism; malonyl-CoA biosynthesis; malonyl-CoA from acetyl-CoA: step 1/1. In terms of biological role, component of the acetyl coenzyme A carboxylase (ACC) complex. First, biotin carboxylase catalyzes the carboxylation of biotin on its carrier protein (BCCP) and then the CO(2) group is transferred by the carboxyltransferase to acetyl-CoA to form malonyl-CoA. This is Acetyl-coenzyme A carboxylase carboxyl transferase subunit alpha from Aliarcobacter butzleri (strain RM4018) (Arcobacter butzleri).